We begin with the raw amino-acid sequence, 148 residues long: UPF0756 membrane protein KPN78578_11500 (148 aa).

The next 4 helical transmembrane spans lie at 14 to 34 (ALGF…LIIV), 51 to 71 (LTVG…SGTL), 86 to 106 (LLAI…VSLM), and 121 to 141 (VLGV…AGII).

The protein belongs to the UPF0756 family.

The protein resides in the cell membrane. In Klebsiella pneumoniae subsp. pneumoniae (strain ATCC 700721 / MGH 78578), this protein is UPF0756 membrane protein KPN78578_11500.